Reading from the N-terminus, the 259-residue chain is Phosphoadenosine 5'-phosphosulfate reductase (259 aa).

The active-site Nucleophile; cysteine thiosulfonate intermediate is the cysteine 244.

Belongs to the PAPS reductase family. CysH subfamily.

The protein resides in the cytoplasm. The enzyme catalyses [thioredoxin]-disulfide + sulfite + adenosine 3',5'-bisphosphate + 2 H(+) = [thioredoxin]-dithiol + 3'-phosphoadenylyl sulfate. The protein operates within sulfur metabolism; hydrogen sulfide biosynthesis; sulfite from sulfate: step 3/3. Its function is as follows. Catalyzes the formation of sulfite from phosphoadenosine 5'-phosphosulfate (PAPS) using thioredoxin as an electron donor. The polypeptide is Phosphoadenosine 5'-phosphosulfate reductase (Vibrio parahaemolyticus serotype O3:K6 (strain RIMD 2210633)).